The chain runs to 358 residues: MTLETPVRVLIVDDSAVVRQMLTEILSRDAGIEVVGSAADPLLAREKIKRLNPDVITLDVEMPRMDGLVFLENLMRLRPTPVVMISSLTERGADTTLQALSLGAVDFVSKPKIDVARGLEGYAEEIVSKVKMAAKAKVSALHRPSAPKVTLDMQSAPMPGSALRFRTTDRLVAIGASAGGTEALRVVLEHMPADAPAVVMTQHLPASFSTAFAERLNRHSAMSVREATDGEAILPGHAYLPPGGQHLRIIRDGARWRCRIDDGPPVNRHKPAVDVLFRSVAANAGANAVGAILTGMGDDGARGLLEMLQAGAPTLVQDEASSVVWGMPGAAYKLGAAQEVVPLDRVAERLLALSAQAR.

The region spanning 8-125 (RVLIVDDSAV…ARGLEGYAEE (118 aa)) is the Response regulatory domain. 4-aspartylphosphate is present on aspartate 59. The region spanning 157–352 (PMPGSALRFR…LDRVAERLLA (196 aa)) is the CheB-type methylesterase domain. Active-site residues include serine 177, histidine 203, and aspartate 299.

It belongs to the CheB family. In terms of processing, phosphorylated by CheA. Phosphorylation of the N-terminal regulatory domain activates the methylesterase activity.

Its subcellular location is the cytoplasm. The catalysed reaction is [protein]-L-glutamate 5-O-methyl ester + H2O = L-glutamyl-[protein] + methanol + H(+). It catalyses the reaction L-glutaminyl-[protein] + H2O = L-glutamyl-[protein] + NH4(+). Its function is as follows. Involved in chemotaxis. Part of a chemotaxis signal transduction system that modulates chemotaxis in response to various stimuli. Catalyzes the demethylation of specific methylglutamate residues introduced into the chemoreceptors (methyl-accepting chemotaxis proteins or MCP) by CheR. Also mediates the irreversible deamidation of specific glutamine residues to glutamic acid. This is Protein-glutamate methylesterase/protein-glutamine glutaminase 2 from Xanthomonas oryzae pv. oryzae (strain MAFF 311018).